The sequence spans 374 residues: (R)-phenyllactyl-CoA dehydratase beta subunit (374 aa).

Belongs to the FldB/FldC dehydratase alpha/beta subunit family. As to quaternary structure, part of the heterotrimeric phenyllactate dehydratase complex FldABC, composed of (R)-phenyllactate CoA-transferase (FldA) and a heterodimeric (R)-phenyllactyl-CoA dehydratase (FldB and FldC). [4Fe-4S] cluster serves as cofactor. The cofactor is No flavin could be detected in the FldABC complex, and the addition of FAD, FMN or riboflavin to the dehydratase do not increase enzymatic activity..

It catalyses the reaction (R)-3-phenyllactoyl-CoA = (E)-cinnamoyl-CoA + H2O. The catalysed reaction is (R)-3-(4-hydroxyphenyl)lactoyl-CoA = (E)-4-coumaroyl-CoA + H2O. The enzyme catalyses (R)-3-(indol-3-yl)lactoyl-CoA = (E)-3-(indol-3-yl)acryloyl-CoA + H2O. It participates in amino-acid degradation; L-phenylalanine degradation. In terms of biological role, component of the phenyllactate dehydratase complex FldABC that is involved in the fermentation of L-phenylalanine via a Stickland reaction. This complex catalyzes the reversible syn-dehydration of (R)-phenyllactate to (E)-cinnamate in two steps, a CoA-transfer from cinnamoyl-CoA to phenyllactate, catalyzed by FldA, followed by the dehydration of phenyllactyl-CoA to cinnamoyl-CoA, catalyzed by FldB and FldC. Requires the activator FldI to initiate catalysis. This is (R)-phenyllactyl-CoA dehydratase beta subunit from Clostridium sporogenes.